The chain runs to 109 residues: Glutaredoxin 4 (109 aa).

Residues 4–106 (LDKIKKQISE…TLLADVAAKY (103 aa)) enclose the Glutaredoxin domain. Lys21 serves as a coordination point for glutathione. [2Fe-2S] cluster is bound at residue Cys29. Glutathione-binding positions include Arg58, Phe70, and 83 to 84 (CD).

The protein belongs to the glutaredoxin family. Monothiol subfamily. In terms of assembly, homodimer.

Its subcellular location is the cytoplasm. Functionally, monothiol glutaredoxin involved in the biogenesis of iron-sulfur clusters. The chain is Glutaredoxin 4 (grxD) from Pasteurella multocida (strain Pm70).